We begin with the raw amino-acid sequence, 311 residues long: Porphobilinogen deaminase (311 aa).

The residue at position 241 (Cys-241) is an S-(dipyrrolylmethanemethyl)cysteine.

This sequence belongs to the HMBS family. In terms of assembly, monomer. It depends on dipyrromethane as a cofactor.

It carries out the reaction 4 porphobilinogen + H2O = hydroxymethylbilane + 4 NH4(+). It functions in the pathway porphyrin-containing compound metabolism; protoporphyrin-IX biosynthesis; coproporphyrinogen-III from 5-aminolevulinate: step 2/4. Its function is as follows. Tetrapolymerization of the monopyrrole PBG into the hydroxymethylbilane pre-uroporphyrinogen in several discrete steps. In Campylobacter curvus (strain 525.92), this protein is Porphobilinogen deaminase.